The primary structure comprises 133 residues: Ubiquitin-like FUBI-ribosomal protein eS30 fusion protein (133 aa).

A disordered region spans residues 84–110; that stretch reads GKVRGQTPKVAKQEKKKKKTGRAKRRM. Residues 97 to 110 are compositionally biased toward basic residues; that stretch reads EKKKKKTGRAKRRM. Lys-125 carries the post-translational modification N6-succinyllysine.

This sequence in the N-terminal section; belongs to the ubiquitin family. It in the C-terminal section; belongs to the eukaryotic ribosomal protein eS30 family. In terms of assembly, component of the 40S subunit of the ribosome. In terms of processing, FUBI is cleaved from ribosomal protein S30 by the deubiquitinase USP36 before the assembly of ribosomal protein S30 into pre-40S ribosomal particles. FUBI removal from ribosomal protein S30 is a crucial event for the final maturation of pre-40S particles.

The protein localises to the nucleus. The protein resides in the cytoplasm. Its function is as follows. May have pro-apoptotic activity. In terms of biological role, component of the 40S subunit of the ribosome. Contributes to the assembly and function of 40S ribosomal subunits. The sequence is that of Ubiquitin-like FUBI-ribosomal protein eS30 fusion protein (Fau) from Mus musculus (Mouse).